The sequence spans 83 residues: UPF0248 protein TGAM_1209 (83 aa).

Belongs to the UPF0248 family.

This is UPF0248 protein TGAM_1209 from Thermococcus gammatolerans (strain DSM 15229 / JCM 11827 / EJ3).